The primary structure comprises 186 residues: Ribosome maturation factor RimM (186 aa).

A PRC barrel domain is found at 103-174; it reads PEEYHYSDLI…ELQVQPPPGL (72 aa).

It belongs to the RimM family. In terms of assembly, binds ribosomal protein uS19.

It is found in the cytoplasm. Its function is as follows. An accessory protein needed during the final step in the assembly of 30S ribosomal subunit, possibly for assembly of the head region. Essential for efficient processing of 16S rRNA. May be needed both before and after RbfA during the maturation of 16S rRNA. It has affinity for free ribosomal 30S subunits but not for 70S ribosomes. The protein is Ribosome maturation factor RimM of Synechococcus sp. (strain JA-3-3Ab) (Cyanobacteria bacterium Yellowstone A-Prime).